The following is a 509-amino-acid chain: Acetyl-coenzyme A carboxylase carboxyl transferase subunit beta, chloroplastic (509 aa).

A disordered region spans residues 164 to 216; it reads HGSVCDGESHNSSEGESSSRRTHTKGVDLTIRESSNENERESSNENERKSSND. Composition is skewed to basic and acidic residues over residues 170-182 and 193-216; these read GESHNSSEGESSS and TIRESSNENERESSNENERKSSND. Positions 226–509 constitute a CoA carboxyltransferase N-terminal domain; sequence LWLQCENCYG…LNQNSNQVEC (284 aa). Zn(2+) is bound by residues Cys-230, Cys-233, Cys-249, and Cys-252. Residues 230-252 form a C4-type zinc finger; that stretch reads CENCYGLNYKKFLKSKMNICEQC. Residues 288–307 form a disordered region; the sequence is FDSEGEQEQEQEQEQEEEET.

This sequence belongs to the AccD/PCCB family. In terms of assembly, acetyl-CoA carboxylase is a heterohexamer composed of biotin carboxyl carrier protein, biotin carboxylase and 2 subunits each of ACCase subunit alpha and ACCase plastid-coded subunit beta (accD). Requires Zn(2+) as cofactor.

It localises to the plastid. The protein localises to the chloroplast stroma. It carries out the reaction N(6)-carboxybiotinyl-L-lysyl-[protein] + acetyl-CoA = N(6)-biotinyl-L-lysyl-[protein] + malonyl-CoA. It participates in lipid metabolism; malonyl-CoA biosynthesis; malonyl-CoA from acetyl-CoA: step 1/1. In terms of biological role, component of the acetyl coenzyme A carboxylase (ACC) complex. Biotin carboxylase (BC) catalyzes the carboxylation of biotin on its carrier protein (BCCP) and then the CO(2) group is transferred by the transcarboxylase to acetyl-CoA to form malonyl-CoA. This chain is Acetyl-coenzyme A carboxylase carboxyl transferase subunit beta, chloroplastic, found in Ipomoea purpurea (Common morning glory).